Reading from the N-terminus, the 142-residue chain is Small ribosomal subunit protein uS19 (142 aa).

At serine 2 the chain carries N-acetylserine. Glycyl lysine isopeptide (Lys-Gly) (interchain with G-Cter in ubiquitin) cross-links involve residues lysine 24, lysine 35, and lysine 64.

Belongs to the universal ribosomal protein uS19 family. In terms of assembly, component of the small ribosomal subunit (SSU). Mature yeast ribosomes consist of a small (40S) and a large (60S) subunit. The 40S small subunit contains 1 molecule of ribosomal RNA (18S rRNA) and 33 different proteins (encoded by 57 genes). The large 60S subunit contains 3 rRNA molecules (25S, 5.8S and 5S rRNA) and 46 different proteins (encoded by 81 genes).

It is found in the cytoplasm. In terms of biological role, component of the ribosome, a large ribonucleoprotein complex responsible for the synthesis of proteins in the cell. The small ribosomal subunit (SSU) binds messenger RNAs (mRNAs) and translates the encoded message by selecting cognate aminoacyl-transfer RNA (tRNA) molecules. The large subunit (LSU) contains the ribosomal catalytic site termed the peptidyl transferase center (PTC), which catalyzes the formation of peptide bonds, thereby polymerizing the amino acids delivered by tRNAs into a polypeptide chain. The nascent polypeptides leave the ribosome through a tunnel in the LSU and interact with protein factors that function in enzymatic processing, targeting, and the membrane insertion of nascent chains at the exit of the ribosomal tunnel. uS19 is involved in the nuclear export of the small ribosomal subunit precursor. Has a role in the late stage of the assembly of pre-40S particles within the nucleus and controls their export to the cytoplasm. This chain is Small ribosomal subunit protein uS19, found in Saccharomyces cerevisiae (strain ATCC 204508 / S288c) (Baker's yeast).